A 413-amino-acid chain; its full sequence is Arginine biosynthesis bifunctional protein ArgJ (413 aa).

Residues T158, K184, T195, E285, N408, and S413 each contribute to the substrate site. The active-site Nucleophile is the T195.

Belongs to the ArgJ family. In terms of assembly, heterotetramer of two alpha and two beta chains.

The protein resides in the cytoplasm. It carries out the reaction N(2)-acetyl-L-ornithine + L-glutamate = N-acetyl-L-glutamate + L-ornithine. The enzyme catalyses L-glutamate + acetyl-CoA = N-acetyl-L-glutamate + CoA + H(+). Its pathway is amino-acid biosynthesis; L-arginine biosynthesis; L-ornithine and N-acetyl-L-glutamate from L-glutamate and N(2)-acetyl-L-ornithine (cyclic): step 1/1. The protein operates within amino-acid biosynthesis; L-arginine biosynthesis; N(2)-acetyl-L-ornithine from L-glutamate: step 1/4. Its function is as follows. Catalyzes two activities which are involved in the cyclic version of arginine biosynthesis: the synthesis of N-acetylglutamate from glutamate and acetyl-CoA as the acetyl donor, and of ornithine by transacetylation between N(2)-acetylornithine and glutamate. This Mesorhizobium japonicum (strain LMG 29417 / CECT 9101 / MAFF 303099) (Mesorhizobium loti (strain MAFF 303099)) protein is Arginine biosynthesis bifunctional protein ArgJ.